The sequence spans 130 residues: Small ribosomal subunit protein uS9 (130 aa).

Belongs to the universal ribosomal protein uS9 family.

In Paracidovorax citrulli (strain AAC00-1) (Acidovorax citrulli), this protein is Small ribosomal subunit protein uS9.